The following is a 495-amino-acid chain: uncharacterized protein (495 aa).

It is found in the cytoplasm. Its subcellular location is the nucleus. This is an uncharacterized protein from Saccharomyces cerevisiae (strain ATCC 204508 / S288c) (Baker's yeast).